Consider the following 189-residue polypeptide: MTLVQVMAQDDRDQVVLRTADRTEIADTLRPFGIQLDRWPLRELPADAGQDAVLAAYRAEVDEVCRAGGYRFVDVVRLVPAPEDPEWPARAAAARGRFLDEHRHTEHEVRFFVEGRGCFYLHLGDKVYALVCEAGDLVSVPAGTTHWFDMGAQPHFCAIRFFEREDGWIGDFTGSPIASTMPTLDELVG.

His102, His104, Glu108, and His146 together coordinate Fe(2+). Residues His102, His104, Glu108, and His146 each coordinate Ni(2+).

It belongs to the acireductone dioxygenase (ARD) family. Monomer. It depends on Fe(2+) as a cofactor. The cofactor is Ni(2+).

The catalysed reaction is 1,2-dihydroxy-5-(methylsulfanyl)pent-1-en-3-one + O2 = 3-(methylsulfanyl)propanoate + CO + formate + 2 H(+). It carries out the reaction 1,2-dihydroxy-5-(methylsulfanyl)pent-1-en-3-one + O2 = 4-methylsulfanyl-2-oxobutanoate + formate + 2 H(+). Its pathway is amino-acid biosynthesis; L-methionine biosynthesis via salvage pathway; L-methionine from S-methyl-5-thio-alpha-D-ribose 1-phosphate: step 5/6. Functionally, catalyzes 2 different reactions between oxygen and the acireductone 1,2-dihydroxy-3-keto-5-methylthiopentene (DHK-MTPene) depending upon the metal bound in the active site. Fe-containing acireductone dioxygenase (Fe-ARD) produces formate and 2-keto-4-methylthiobutyrate (KMTB), the alpha-ketoacid precursor of methionine in the methionine recycle pathway. Ni-containing acireductone dioxygenase (Ni-ARD) produces methylthiopropionate, carbon monoxide and formate, and does not lie on the methionine recycle pathway. This Nocardia farcinica (strain IFM 10152) protein is Acireductone dioxygenase 1.